A 215-amino-acid chain; its full sequence is 3-demethoxyubiquinol 3-hydroxylase (215 aa).

Fe cation contacts are provided by Glu-64, Glu-94, His-97, Glu-146, Glu-178, and His-181.

It belongs to the COQ7 family. It depends on Fe cation as a cofactor.

The protein localises to the cell membrane. The enzyme catalyses a 5-methoxy-2-methyl-3-(all-trans-polyprenyl)benzene-1,4-diol + AH2 + O2 = a 3-demethylubiquinol + A + H2O. The protein operates within cofactor biosynthesis; ubiquinone biosynthesis. Catalyzes the hydroxylation of 2-nonaprenyl-3-methyl-6-methoxy-1,4-benzoquinol during ubiquinone biosynthesis. The protein is 3-demethoxyubiquinol 3-hydroxylase of Pseudomonas putida (strain GB-1).